The chain runs to 25 residues: Plasticin-L1 (25 aa).

The protein belongs to the frog skin active peptide (FSAP) family. Plasticin subfamily. As to expression, expressed by the skin glands.

It localises to the secreted. The protein localises to the target cell membrane. In terms of biological role, may play an immunomodulatory role in frog skin in response to microbial pathogens, since it increases the production of the pro-inflammatory cytokines TNF-alpha, IL-1 beta, IL-12, and IL-23 by mouse peritoneal macrophages and has no effect on the production of the anti-inflammatory cytokine IL-10. It is not known whether stimulation of cytokine production arises from a non-specific interaction of the peptide with the macrophage membrane or from interaction with a specific receptor. Shows a low activity in stimulating insulin release from rat BRIN-BD11 beta cells, and acts without loss of integrity of the plasma membrane. Shows a marked affinity for both neutral and anionic membranes models. Does not show antibacterial (E.coli and S.aureus). Does not show hemolytic activity against human erythrocytes. This chain is Plasticin-L1, found in Leptodactylus laticeps (Santa Fe frog).